Reading from the N-terminus, the 474-residue chain is GSASAPTLFPLVSCENSPSDTSSVAVGCLAQDFLPDSITFSWKYKNNSDISSTRGFPSVLRGGKYAATSQVLLPSKDVMQGTDEHVVCKVQHPNGNKEKNVPLPVIAELPPKVSVFVPPRDGFFGNPRKSKLICQATGFSPRQIQVSWLREGKQVGSGVTTDQVQAEAKESGPTTYKVTSTLTIKESDWLGQSMFTCRVDHRGLTFQQNASSMCVPDQDTAIRVFAIPPSFASIFLTKSTKLTCLVTDLTTYDSVTISWTRQNGEAVKTHTNISESHPNATFSAVGEASICEDDWNSGERFTCTVTHTDLPSPLKQTISRPKGVALHRPDVYLLPPAREQLNLRESATITCLVTGFSPADVFVQWMQRGQPLSPEKYVTSAPMPEPQAPGRYFAHSILTVSEEEWNTGETYTCVVAHEALPNRVTERTVDKSTEGEVSADEEGFENLWATASTFIVLFLLSLFYSTTVTLFKVK.

A CH1 region spans residues 1-105 (GSASAPTLFP…NKEKNVPLPV (105 aa)). Residues 1–450 (GSASAPTLFP…EEGFENLWAT (450 aa)) are Extracellular-facing. 4 Ig-like domains span residues 6 to 102 (PTLF…KNVP), 111 to 211 (PKVS…QNAS), 229 to 319 (PSFA…QTIS), and 329 to 430 (PDVY…RTVD). Disulfide bonds link C28-C88 and C134-C197. N-linked (GlcNAc...) (complex) asparagine glycosylation is present at N46. Residues 106–217 (IAELPPKVSV…QNASSMCVPD (112 aa)) form a CH2 region. N-linked (GlcNAc...) (complex) asparagine glycosylation occurs at N209. Residues 218–323 (QDTAIRVFAI…LKQTISRPKG (106 aa)) are CH3. 2 cysteine pairs are disulfide-bonded: C244–C303 and C351–C413. N-linked (GlcNAc...) asparagine glycosylation is found at N272 and N279. Residues 324–452 (VALHRPDVYL…GFENLWATAS (129 aa)) form a CH4 region. The tract at residues 437–453 (VSADEEGFENLWATAST) is important for IgM oligomerization. N-linked (GlcNAc...) asparagine glycosylation occurs at D440. The helical transmembrane segment at 451–471 (ASTFIVLFLLSLFYSTTVTLF) threads the bilayer. The Cytoplasmic segment spans residues 472–474 (KVK).

The basic structural unit of both sIgM and mIgM molecules consists of two identical heavy chains and two identical light chains; disulfide-linked. N-terminal variable regions of the heavy and light chains form the antigen binding sites, whereas the C-terminal constant regions of the heavy chains interact with immune receptors to mediate effector functions. In terms of assembly, part of IgM antibody. Forms high order oligomers, homopentamers stabilized by the JCHAIN and homohexamers that lack JCHAIN. The oligomerization amplifies an inherently low affinity of IgM antibodies for the antigen by multi-point attachment (avidity). Adjacent IgM protomers associate via interchain disulfide links to form an asymmetric pentameric structure with a 50 degree gap. A single copy of JCHAIN is covalently linked to the first and the fifth IgM monomers via interchain disulfide bonds thus closing the pentamer ring. Only JCHAIN-containing IgM binds PIGR secretory component (via D1-CDR1 region); this interaction is a prerequisite for IgM transcytosis across mucosal epithelium. Pentameric sIgM interacts (via CH4 domain) with FCRM (via Ig-like domain); the interaction is glycan-independent and multivalent theoretically involving up to eight binding sites for the IgM pentamer. Interacts with FCAMR; this interaction facilitates the endocytosis of IgM-coated microbes or IgM-antigen immune complexes. Antigen-bound IgM (via the Fc region) binds to globular domains of C1q component of the complement system, all three modules C1QA, C1QB and C1QC being involved in IgM binding; this interaction is multivalent. Pentameric sIgM (via Fc region) interacts with CD5L (via SRCR2) through interchain disulfide-linkages; this interaction protects CD5L from renal excretion and provides for high levels of CD5L in circulation. As to quaternary structure, part of IgM B cell receptor complex on pre-B cells, immature and mature B cells. The BCR complex consists of one membrane-bound IgM molecule responsible for antigen binding, non-covalently associated with CD79A and CD79B signaling chains. In terms of processing, N-glycosylated; important for IgM secretion and its localization at the plasma membrane. The interaction with FCMR is glycan-independent.

The protein resides in the secreted. It localises to the cell membrane. Its function is as follows. Constant region of immunoglobulin heavy chains. Immunoglobulins, also known as antibodies, are membrane-bound or secreted glycoproteins produced by B lymphocytes. In the recognition phase of humoral immunity, the membrane-bound immunoglobulins serve as receptors which, upon binding of a specific antigen, trigger the clonal expansion and differentiation of B lymphocytes into immunoglobulins-secreting plasma cells. Secreted immunoglobulins mediate the effector phase of humoral immunity, which results in the elimination of bound antigens. The antigen binding site is formed by the variable domain of one heavy chain, together with that of its associated light chain. Thus, each immunoglobulin has two antigen binding sites with remarkable affinity for a particular antigen. The variable domains are assembled by a process called V-(D)-J rearrangement and can then be subjected to somatic hypermutations which, after exposure to antigen and selection, allow affinity maturation for a particular antigen. Constant region of secreted IgM (sIgM), also known as the Fc region of IgM antibody. Able to multimerize, forms high order polymers, mainly pentamers and occasionally hexamers, providing for multivalency and high avidity recognition of antigens. Natural sIgM are polyreactive and recognize conserved self- and pathogen-derived structures, whereas immune sIgM are secreted only upon exposure to pathogens and are antigen-specific. Both natural and immune sIgM are required for an efficient humoral immune response to infection. Mediates sIgM effector functions mostly via Fc receptors and the complement system. On lymphoid cells binds high-affinity Fc receptor FCMR and promotes induction of an efficient neutralizing IgG response while maintaining tolerance to self-antigens. Recruits C1q complement component to initiate the classical complement pathway, facilitating the recognition and neutralization of pathogens by the host. Together with C1q and mannose-binding lectin promotes the phagocytosis of apoptotic cells by macrophages, ensuring the clearance of potential autoimmune epitopes from tissues. Involved in mucosal immunity. It is transported by transcytosis across mucosal epithelium by PIGR and secreted on the apical side in complex with PIGR secretory component to scan mucosal lining for pathogens. IgM-antigen complexes undergo FCMR-mediated retrotranscytosis across mucosal M cells toward antigen-presenting cells in mucosal lymphoid tissues. Functionally, constant region of membrane-bound IgM, part of the B cell receptor complex (BCR). IgM BCR provides constitutive tonic signaling for B cell survival. Mediates pre-BCR signaling that regulates B cell selection and rearrangement of Ig genes via allelic exclusion. This chain is Immunoglobulin heavy constant mu, found in Homo sapiens (Human).